The chain runs to 91 residues: Small ribosomal subunit protein uS19 (91 aa).

The protein belongs to the universal ribosomal protein uS19 family.

Its function is as follows. Protein S19 forms a complex with S13 that binds strongly to the 16S ribosomal RNA. This is Small ribosomal subunit protein uS19 from Fusobacterium nucleatum subsp. nucleatum (strain ATCC 25586 / DSM 15643 / BCRC 10681 / CIP 101130 / JCM 8532 / KCTC 2640 / LMG 13131 / VPI 4355).